The chain runs to 95 residues: Co-chaperonin GroES (95 aa).

This sequence belongs to the GroES chaperonin family. As to quaternary structure, heptamer of 7 subunits arranged in a ring. Interacts with the chaperonin GroEL.

It is found in the cytoplasm. Functionally, together with the chaperonin GroEL, plays an essential role in assisting protein folding. The GroEL-GroES system forms a nano-cage that allows encapsulation of the non-native substrate proteins and provides a physical environment optimized to promote and accelerate protein folding. GroES binds to the apical surface of the GroEL ring, thereby capping the opening of the GroEL channel. This Neisseria meningitidis serogroup C (strain 053442) protein is Co-chaperonin GroES.